Consider the following 83-residue polypeptide: U5-theraphotoxin-Hs1c (83 aa).

An N-terminal signal peptide occupies residues 1–21 (MKTSMFLTLTGLVLLFVVCYA). Positions 22–49 (SESEEKEFPKELLSSIFAADSDFKVEER) are excised as a propeptide. 3 cysteine pairs are disulfide-bonded: C51/C63, C56/C68, and C62/C75.

It belongs to the neurotoxin 10 (Hwtx-1) family. 51 (Hntx-8) subfamily. Hntx-8 sub-subfamily. As to expression, expressed by the venom gland.

The protein localises to the secreted. Its function is as follows. Agglutinates erythrocytes. This is U5-theraphotoxin-Hs1c from Cyriopagopus schmidti (Chinese bird spider).